The primary structure comprises 428 residues: 3-phosphoshikimate 1-carboxyvinyltransferase (428 aa).

3-phosphoshikimate is bound by residues K22, S23, and R27. K22 contributes to the phosphoenolpyruvate binding site. Residues G98 and R126 each coordinate phosphoenolpyruvate. Positions 172, 173, 174, 200, 316, 339, and 343 each coordinate 3-phosphoshikimate. A phosphoenolpyruvate-binding site is contributed by Q174. The active-site Proton acceptor is the D316. Residues R347, R389, and K414 each coordinate phosphoenolpyruvate.

It belongs to the EPSP synthase family. Monomer.

Its subcellular location is the cytoplasm. The catalysed reaction is 3-phosphoshikimate + phosphoenolpyruvate = 5-O-(1-carboxyvinyl)-3-phosphoshikimate + phosphate. It functions in the pathway metabolic intermediate biosynthesis; chorismate biosynthesis; chorismate from D-erythrose 4-phosphate and phosphoenolpyruvate: step 6/7. Catalyzes the transfer of the enolpyruvyl moiety of phosphoenolpyruvate (PEP) to the 5-hydroxyl of shikimate-3-phosphate (S3P) to produce enolpyruvyl shikimate-3-phosphate and inorganic phosphate. The polypeptide is 3-phosphoshikimate 1-carboxyvinyltransferase (Psychromonas ingrahamii (strain DSM 17664 / CCUG 51855 / 37)).